Here is an 85-residue protein sequence, read N- to C-terminus: uncharacterized protein (85 aa).

The first 21 residues, 1-21 (MRPLLCALAGLALLCAVGALA), serve as a signal peptide directing secretion. Residues 22-35 (DGREDRGSPGDTGE) show a composition bias toward basic and acidic residues. The disordered stretch occupies residues 22-85 (DGREDRGSPG…EVVHLPGSTL (64 aa)). A compositionally biased stretch (low complexity) spans 36 to 51 (RPAGPARGPGLEPARG).

It localises to the secreted. This is an uncharacterized protein from Homo sapiens (Human).